Consider the following 96-residue polypeptide: Non-specific lipid-transfer protein 2G (96 aa).

The N-terminal stretch at 1–29 (MAGMMKKQVVTALMLALVVLAAAPGGARA) is a signal peptide. 4 disulfides stabilise this stretch: Cys31–Cys63, Cys39–Cys53, Cys54–Cys89, and Cys65–Cys96.

It localises to the secreted. Its subcellular location is the cell wall. Transfer lipids across membranes. May play a role in plant defense or in the biosynthesis of cuticle layers. In Triticum aestivum (Wheat), this protein is Non-specific lipid-transfer protein 2G.